Here is a 426-residue protein sequence, read N- to C-terminus: Coiled-coil domain-containing protein 86 (426 aa).

Residues 1–426 (MDTPLRRSRR…QPPQRPVAKV (426 aa)) form a disordered region. At Ser18 the chain carries Phosphoserine. A compositionally biased stretch (basic and acidic residues) spans 33–49 (ALVDFKSNSEETGELKS). The segment covering 55–145 (LSLPSPGPQP…SLPSPGPQPE (91 aa)) has biased composition (pro residues). At Ser59 the chain carries Phosphoserine. Residue Thr66 is modified to Phosphothreonine. Ser67, Ser70, Ser161, Ser172, Ser183, Ser191, Ser194, Ser225, Ser252, Ser253, and Ser283 each carry phosphoserine. Residues 241–255 (QPAQELTVQAPSSPE) show a composition bias toward polar residues. Residues 304–320 (GKPKSGRVWKDRSKKRF) show a composition bias toward basic residues. Residues 339–383 (ERQERKLAKDFARHLEEEKQRRRQEKKERRAENLRRRLENERKAE) are compositionally biased toward basic and acidic residues. Positions 346-389 (AKDFARHLEEEKQRRRQEKKERRAENLRRRLENERKAEIVQVIR) form a coiled coil. The segment covering 392–402 (AKLKKAKKKQL) has biased composition (basic residues). The residue at position 408 (Arg408) is a Citrulline.

In terms of processing, citrullinated by PADI4. In terms of tissue distribution, highly expressed in testis. Also expressed in heart, liver, kidney.

It is found in the nucleus. The protein localises to the chromosome. It localises to the nucleolus. In terms of biological role, required for proper chromosome segregation during mitosis and error-free mitotic progression. This Mus musculus (Mouse) protein is Coiled-coil domain-containing protein 86.